We begin with the raw amino-acid sequence, 305 residues long: Superkiller complex protein 8 (305 aa).

7 WD repeats span residues 14–57 (AHED…LEMQ), 62–101 (GHQLGVVSVDVSPSGNIMASSSLDAHIRLWDLESGKQIRS), 104–143 (AGPVDAWSVAFSPDSQHLATGSHVGKVNIFGVETGKKEYS), 146–187 (TRGK…HTLE), 188–227 (GHAMPIRSLTFSTDSQLLVTASDDGYIKIYDVQHASLAAT), 230–269 (GHGSWVLNVAFSPDDAHFVSSSSDKSVKVWDVSARTCVHT), and 272–305 (DHQDQVWGVKYNRNGSKIVSVGDDQEIHVYDCPI).

The protein belongs to the SKI8 family. In terms of assembly, component of the PAF1 complex. Component of the SKI complex.

It localises to the nucleus. The protein resides in the cytoplasm. Its function is as follows. Component of the PAF1 complex (PAF1C) which has multiple functions during transcription by RNA polymerase II and is implicated in regulation of development and maintenance of embryonic stem cell pluripotency. PAF1C associates with RNA polymerase II through interaction with POLR2A CTD non-phosphorylated and 'Ser-2'- and 'Ser-5'-phosphorylated forms and is involved in transcriptional elongation, acting both independently and synergistically with TCEA1 and in cooperation with the DSIF complex and HTATSF1. Also acts as a component of the SKI complex, a multiprotein complex that assists the RNA-degrading exosome during the mRNA decay and quality-control pathways. The SKI complex catalyzes mRNA extraction from 80S ribosomal complexes in the 3'-5' direction and channels mRNA to the cytosolic exosome for degradation. This Xenopus laevis (African clawed frog) protein is Superkiller complex protein 8 (skic8).